Reading from the N-terminus, the 158-residue chain is MDITNIKEMNYEEVFSITITVDKPILIGQDDIVGRRQLIPIISGKVSGNNFNGKVLPGGIDSQIVRPDGKCELSARYAIRLDDGAAIYIENNGIRTVPDEYIEAVKSGEFVDPNAYYFRTIPTFETYSPKYKWMMNHIFVCCASRLPENVLLKFYKIS.

This sequence belongs to the UPF0311 family.

This Clostridium acetobutylicum (strain ATCC 824 / DSM 792 / JCM 1419 / IAM 19013 / LMG 5710 / NBRC 13948 / NRRL B-527 / VKM B-1787 / 2291 / W) protein is UPF0311 protein CA_C3321.